The following is a 506-amino-acid chain: Chorion-specific transcription factor GCMb (506 aa).

Residues 19 to 174 (LSWDINDPQM…KSETEARRSA (156 aa)) constitute a DNA-binding region (GCM). The Zn(2+) site is built by cysteine 81, cysteine 87, cysteine 91, cysteine 118, cysteine 121, cysteine 130, histidine 157, and histidine 159. Residues 155–172 (GVHDHPRPESKSETEARR) show a composition bias toward basic and acidic residues. Residues 155 to 213 (GVHDHPRPESKSETEARRSAIKRQMASFYQPQKKRIRESEAEENQDSSGHFSNIPPLEN) are disordered. The segment at 379-395 (LQTVITTTTKVSYQAYQ) is C-terminal conserved inhibitory domain (CCID).

The protein localises to the nucleus. Transcription factor that binds specific sequences on gene promoters and activate their transcription. Through the regulation of gene transcription, may play a role in parathyroid gland development. The chain is Chorion-specific transcription factor GCMb from Homo sapiens (Human).